Here is a 100-residue protein sequence, read N- to C-terminus: UPF0248 protein APE_0939 (100 aa).

Belongs to the UPF0248 family.

The polypeptide is UPF0248 protein APE_0939 (Aeropyrum pernix (strain ATCC 700893 / DSM 11879 / JCM 9820 / NBRC 100138 / K1)).